A 329-amino-acid chain; its full sequence is Quinone oxidoreductase (329 aa).

An N-acetylalanine modification is found at alanine 2. Lysine 23 carries the post-translational modification N6-acetyllysine. Residues tyrosine 53, 158–161, glycine 181, histidine 200, asparagine 229, 246–249, and 269–271 each bind NADP(+); these read SGGV, VGSR, and VAL. Serine 248 carries the post-translational modification Phosphoserine.

Belongs to the zinc-containing alcohol dehydrogenase family. Quinone oxidoreductase subfamily. As to quaternary structure, homotetramer.

Its subcellular location is the cytoplasm. The catalysed reaction is 2 a quinone + NADPH + H(+) = 2 a 1,4-benzosemiquinone + NADP(+). Functionally, does not have alcohol dehydrogenase activity. Binds NADP and acts through a one-electron transfer process. Orthoquinones, such as 1,2-naphthoquinone or 9,10-phenanthrenequinone, are the best substrates (in vitro). May act in the detoxification of xenobiotics. Interacts with (AU)-rich elements (ARE) in the 3'-UTR of target mRNA species and enhances their stability. NADPH binding interferes with mRNA binding. The chain is Quinone oxidoreductase (CRYZ) from Sus scrofa (Pig).